A 548-amino-acid chain; its full sequence is Probable malate:quinone oxidoreductase (548 aa).

The protein belongs to the MQO family. Requires FAD as cofactor.

The enzyme catalyses (S)-malate + a quinone = a quinol + oxaloacetate. The protein operates within carbohydrate metabolism; tricarboxylic acid cycle; oxaloacetate from (S)-malate (quinone route): step 1/1. This chain is Probable malate:quinone oxidoreductase, found in Escherichia coli O6:K15:H31 (strain 536 / UPEC).